A 315-amino-acid chain; its full sequence is Transaldolase (315 aa).

The active-site Schiff-base intermediate with substrate is lysine 125.

The protein belongs to the transaldolase family. Type 1 subfamily. As to quaternary structure, homodimer.

The protein localises to the cytoplasm. The enzyme catalyses D-sedoheptulose 7-phosphate + D-glyceraldehyde 3-phosphate = D-erythrose 4-phosphate + beta-D-fructose 6-phosphate. Its pathway is carbohydrate degradation; pentose phosphate pathway; D-glyceraldehyde 3-phosphate and beta-D-fructose 6-phosphate from D-ribose 5-phosphate and D-xylulose 5-phosphate (non-oxidative stage): step 2/3. Functionally, transaldolase is important for the balance of metabolites in the pentose-phosphate pathway. The protein is Transaldolase of Polaromonas sp. (strain JS666 / ATCC BAA-500).